The following is a 217-amino-acid chain: Mucosal pentraxin (217 aa).

The first 19 residues, 1-19 (MEKLLLGVLLLAFLPEGMT), serve as a signal peptide directing secretion. The Pentraxin (PTX) domain maps to 24 to 217 (RGKVFIFPEQ…KGYVVVKPKL (194 aa)). Cys55 and Cys114 are joined by a disulfide. Positions 77, 78, 155, 156, 157, and 167 each coordinate Ca(2+).

The protein belongs to the pentraxin family. Homopentamer. Pentraxin (or pentaxin) have a discoid arrangement of 5 non-covalently bound subunits. Ca(2+) is required as a cofactor.

It is found in the secreted. In Bos taurus (Bovine), this protein is Mucosal pentraxin (MPTX).